The sequence spans 212 residues: Cytochrome c biogenesis ATP-binding export protein CcmA (212 aa).

One can recognise an ABC transporter domain in the interval 7–209; that stretch reads LSLQNLSCQR…HLQKLNLAAY (203 aa). 39-46 is a binding site for ATP; that stretch reads GHNGIGKT.

This sequence belongs to the ABC transporter superfamily. CcmA exporter (TC 3.A.1.107) family. The complex is composed of two ATP-binding proteins (CcmA) and two transmembrane proteins (CcmB).

Its subcellular location is the cell inner membrane. The enzyme catalyses heme b(in) + ATP + H2O = heme b(out) + ADP + phosphate + H(+). In terms of biological role, part of the ABC transporter complex CcmAB involved in the biogenesis of c-type cytochromes; once thought to export heme, this seems not to be the case, but its exact role is uncertain. Responsible for energy coupling to the transport system. The polypeptide is Cytochrome c biogenesis ATP-binding export protein CcmA (Haemophilus influenzae (strain ATCC 51907 / DSM 11121 / KW20 / Rd)).